The primary structure comprises 203 residues: Cytochrome c oxidase assembly protein CtaG (203 aa).

The Cytoplasmic portion of the chain corresponds to 1-16; it reads MADQQEKDQKLKKQQR. The chain crosses the membrane as a helical; Signal-anchor for type II membrane protein span at residues 17–39; that stretch reads SNATIAFACLSFFVCMIGAAYAS. Over 40–203 the chain is Periplasmic; the sequence is VPLYRIFCQV…VKAETPTNGS (164 aa).

The protein belongs to the COX11/CtaG family.

Its subcellular location is the cell inner membrane. Functionally, exerts its effect at some terminal stage of cytochrome c oxidase synthesis, probably by being involved in the insertion of the copper B into subunit I. The polypeptide is Cytochrome c oxidase assembly protein CtaG (Brucella anthropi (strain ATCC 49188 / DSM 6882 / CCUG 24695 / JCM 21032 / LMG 3331 / NBRC 15819 / NCTC 12168 / Alc 37) (Ochrobactrum anthropi)).